We begin with the raw amino-acid sequence, 553 residues long: Glucose-6-phosphate isomerase (553 aa).

D-glucose 6-phosphate-binding positions include 164–165 (GS), 215–220 (SKTFTT), Gln359, Glu363, His394, and Lys516. The Proton donor role is filled by Glu363. Catalysis depends on residues His394 and Lys516.

Belongs to the GPI family. In terms of assembly, homodimer.

It localises to the cytoplasm. Its subcellular location is the cytosol. The enzyme catalyses alpha-D-glucose 6-phosphate = beta-D-fructose 6-phosphate. The protein operates within carbohydrate degradation; glycolysis; D-glyceraldehyde 3-phosphate and glycerone phosphate from D-glucose: step 2/4. In terms of biological role, in the cytoplasm, catalyzes the conversion of glucose-6-phosphate to fructose-6-phosphate, the second step in glycolysis, and the reverse reaction during gluconeogenesis. This chain is Glucose-6-phosphate isomerase (pgiA), found in Aspergillus oryzae (strain ATCC 42149 / RIB 40) (Yellow koji mold).